The following is an 84-amino-acid chain: ATP synthase subunit c (84 aa).

The next 2 helical transmembrane spans lie at 13 to 33 and 56 to 76; these read IAVG…WGLI and FIFA…GFWF.

Belongs to the ATPase C chain family. As to quaternary structure, F-type ATPases have 2 components, F(1) - the catalytic core - and F(0) - the membrane proton channel. F(1) has five subunits: alpha(3), beta(3), gamma(1), delta(1), epsilon(1). F(0) has three main subunits: a(1), b(2) and c(10-14). The alpha and beta chains form an alternating ring which encloses part of the gamma chain. F(1) is attached to F(0) by a central stalk formed by the gamma and epsilon chains, while a peripheral stalk is formed by the delta and b chains.

It localises to the cell inner membrane. In terms of biological role, f(1)F(0) ATP synthase produces ATP from ADP in the presence of a proton or sodium gradient. F-type ATPases consist of two structural domains, F(1) containing the extramembraneous catalytic core and F(0) containing the membrane proton channel, linked together by a central stalk and a peripheral stalk. During catalysis, ATP synthesis in the catalytic domain of F(1) is coupled via a rotary mechanism of the central stalk subunits to proton translocation. Key component of the F(0) channel; it plays a direct role in translocation across the membrane. A homomeric c-ring of between 10-14 subunits forms the central stalk rotor element with the F(1) delta and epsilon subunits. In Acidithiobacillus ferrooxidans (strain ATCC 23270 / DSM 14882 / CIP 104768 / NCIMB 8455) (Ferrobacillus ferrooxidans (strain ATCC 23270)), this protein is ATP synthase subunit c.